Here is a 206-residue protein sequence, read N- to C-terminus: Large ribosomal subunit protein eL13 (206 aa).

Over residues 184-193 the composition is skewed to basic and acidic residues; that stretch reads EKTNQKWDGK. The interval 184–206 is disordered; sequence EKTNQKWDGKRKAKAQAAAEPKA.

This sequence belongs to the eukaryotic ribosomal protein eL13 family.

The polypeptide is Large ribosomal subunit protein eL13 (RPL13) (Tetrahymena thermophila (strain SB210)).